The sequence spans 661 residues: 72 kDa type IV collagenase (661 aa).

The signal sequence occupies residues Met-1 to Ala-30. Residues Ala-31–Asn-110 constitute a propeptide, activation peptide. The short motif at Pro-101–Val-108 is the Cysteine switch element. Cys-103 serves as a coordination point for Zn(2+). Residues Tyr-111 to Val-222 form a collagenase-like 1 region. Positions 135 and 169 each coordinate Ca(2+). His-179 and Asp-181 together coordinate Zn(2+). The Ca(2+) site is built by Asp-186 and Gly-187. His-194 contacts Zn(2+). Residues Gly-201, Gly-203, and Asp-205 each coordinate Ca(2+). His-207 lines the Zn(2+) pocket. Positions 209, 210, and 212 each coordinate Ca(2+). The interval Arg-223 to Ser-397 is collagen-binding. 3 Fibronectin type-II domains span residues Ala-229–His-277, Ala-287–Glu-335, and Ser-345–Asp-393. Disulfide bonds link Cys-234/Cys-260, Cys-248/Cys-275, Cys-292/Cys-318, Cys-306/Cys-333, Cys-350/Cys-376, and Cys-364/Cys-391. The segment at Leu-398–Thr-466 is collagenase-like 2. Residue His-404 coordinates Zn(2+). Residue Glu-405 is part of the active site. 2 residues coordinate Zn(2+): His-408 and His-414. Residues Ser-415–Cys-661 are required for inhibitor TIMP2 binding. 4 Hemopexin repeats span residues Leu-469–Leu-517, Pro-518–Pro-564, Val-566–Ile-614, and Pro-615–Cys-661. A disulfide bond links Cys-470 and Cys-661. Ca(2+) contacts are provided by Asp-477, Asp-522, and Asp-570. Residue Asn-574 is glycosylated (N-linked (GlcNAc...) asparagine). Asp-619 lines the Ca(2+) pocket. N-linked (GlcNAc...) asparagine glycosylation is present at Asn-643.

This sequence belongs to the peptidase M10A family. As to quaternary structure, interacts (via the C-terminal hemopexin-like domains-containing region) with the integrin alpha-V/beta-3; the interaction promotes vascular invasion in angiogenic vessels and melamoma cells. Interacts (via the C-terminal PEX domain) with TIMP2 (via the C-terminal); the interaction inhibits the degradation activity. Interacts with GSK3B. The cofactor is Ca(2+). Zn(2+) serves as cofactor. Phosphorylation on multiple sites modulates enzymatic activity. Phosphorylated by PKC in vitro. Post-translationally, the propeptide is processed by MMP14 (MT-MMP1) and MMP16 (MT-MMP3). Autocatalytic cleavage in the C-terminal produces the anti-angiogenic peptide, PEX. This processing appears to be facilitated by binding integrinv/beta3.

The protein localises to the secreted. It localises to the extracellular space. Its subcellular location is the extracellular matrix. It is found in the membrane. The protein resides in the nucleus. The enzyme catalyses Cleavage of gelatin type I and collagen types IV, V, VII, X. Cleaves the collagen-like sequence Pro-Gln-Gly-|-Ile-Ala-Gly-Gln.. In terms of biological role, ubiquitinous metalloproteinase that is involved in diverse functions such as remodeling of the vasculature, angiogenesis, tissue repair, tumor invasion, inflammation, and atherosclerotic plaque rupture. As well as degrading extracellular matrix proteins, can also act on several nonmatrix proteins such as big endothelial 1 and beta-type CGRP promoting vasoconstriction. Also cleaves KISS at a Gly-|-Leu bond. Appears to have a role in myocardial cell death pathways. Contributes to myocardial oxidative stress by regulating the activity of GSK3beta. Cleaves GSK3beta in vitro. Involved in the formation of the fibrovascular tissues. PEX, the C-terminal non-catalytic fragment of MMP2, possesses anti-angiogenic and anti-tumor properties and inhibits cell migration and cell adhesion to FGF2 and vitronectin. Ligand for integrin alpha-v/beta-3 on the surface of blood vessels. The sequence is that of 72 kDa type IV collagenase (MMP2) from Bos taurus (Bovine).